Consider the following 198-residue polypeptide: ATP-dependent Clp protease proteolytic subunit (198 aa).

The active-site Nucleophile is S103. H128 is a catalytic residue.

This sequence belongs to the peptidase S14 family. Fourteen ClpP subunits assemble into 2 heptameric rings which stack back to back to give a disk-like structure with a central cavity, resembling the structure of eukaryotic proteasomes.

It is found in the cytoplasm. It catalyses the reaction Hydrolysis of proteins to small peptides in the presence of ATP and magnesium. alpha-casein is the usual test substrate. In the absence of ATP, only oligopeptides shorter than five residues are hydrolyzed (such as succinyl-Leu-Tyr-|-NHMec, and Leu-Tyr-Leu-|-Tyr-Trp, in which cleavage of the -Tyr-|-Leu- and -Tyr-|-Trp bonds also occurs).. Its function is as follows. Cleaves peptides in various proteins in a process that requires ATP hydrolysis. Has a chymotrypsin-like activity. Plays a major role in the degradation of misfolded proteins. The sequence is that of ATP-dependent Clp protease proteolytic subunit from Ruthia magnifica subsp. Calyptogena magnifica.